The sequence spans 320 residues: Cytochrome f (320 aa).

An N-terminal signal peptide occupies residues 1 to 35 (MQTRNTLSWIKEEITRSISVSLMIYIITWASISNA). 4 residues coordinate heme: Y36, C56, C59, and H60. A helical membrane pass occupies residues 286-306 (VQGLLFFLASVVLAQIFLVLK).

The protein belongs to the cytochrome f family. In terms of assembly, the 4 large subunits of the cytochrome b6-f complex are cytochrome b6, subunit IV (17 kDa polypeptide, petD), cytochrome f and the Rieske protein, while the 4 small subunits are PetG, PetL, PetM and PetN. The complex functions as a dimer. Requires heme as cofactor.

The protein localises to the plastid. It is found in the chloroplast thylakoid membrane. Its function is as follows. Component of the cytochrome b6-f complex, which mediates electron transfer between photosystem II (PSII) and photosystem I (PSI), cyclic electron flow around PSI, and state transitions. This is Cytochrome f from Carica papaya (Papaya).